Consider the following 137-residue polypeptide: uncharacterized protein (137 aa).

A disordered region spans residues 31 to 83; sequence PASPINDKEKDKAGGRLPSGSEPRARAFCEAGADGEQGDPSPADTIKANQGHI.

This is an uncharacterized protein from Homo sapiens (Human).